Consider the following 913-residue polypeptide: Glutamate receptor ionotropic, kainate 2 (913 aa).

Over 1 to 566 (MCAGTMKIIS…VFSFLNPLSP (566 aa)) the chain is Extracellular. N-linked (GlcNAc...) asparagine glycosylation is found at Asn-72, Asn-78, Asn-280, Asn-383, Asn-417, Asn-428, and Asn-435. A disulfide bridge links Cys-101 with Cys-352. Residues Pro-521, Ala-523, and Arg-528 each contribute to the L-glutamate site. N-linked (GlcNAc...) asparagine glycosylation is present at Asn-551. The chain crosses the membrane as a helical span at residues 567-587 (DIWMYILLAYLGVSCVLFVIA). The Cytoplasmic portion of the chain corresponds to 588–643 (RFSPYEWYNPHPCNPDSDVVENNFTLLNSFWFGVGALMQQGSELMPKALSTRIVGG). The helical transmembrane segment at 644 to 664 (IWWFFTLIIISSYTANLAAFL) threads the bilayer. The Extracellular segment spans residues 665 to 824 (TVERMESPID…KEASALGVQN (160 aa)). Positions 694, 695, and 743 each coordinate L-glutamate. An intrachain disulfide couples Cys-755 to Cys-809. Asn-756 carries an N-linked (GlcNAc...) asparagine glycan. Residues 825-845 (IGGIFIVLAAGLVLSVFVAVG) form a helical membrane-spanning segment. Topologically, residues 846–913 (EFLYKSKKNA…RRLPGKETMA (68 aa)) are cytoplasmic.

Belongs to the glutamate-gated ion channel (TC 1.A.10.1) family. GRIK2 subfamily. In terms of assembly, homotetramer and heterotetramer with GRIK5. Tetramers may be formed by the dimerization of dimers.

The protein resides in the cell membrane. The protein localises to the postsynaptic cell membrane. It catalyses the reaction Ca(2+)(in) = Ca(2+)(out). The enzyme catalyses Na(+)(in) = Na(+)(out). Its activity is regulated as follows. Cold receptor activity activated by temperatures between 10-19 degrees Celsius. Functionally, ionotropic glutamate receptor that functions as a cation-permeable ligand-gated ion channel, gated by L-glutamate and the glutamatergic agonist kainic acid. L-glutamate acts as an excitatory neurotransmitter at many synapses in the central nervous system. Binding of the excitatory neurotransmitter L-glutamate induces a conformation change, leading to the opening of the cation channel, and thereby converts the chemical signal to an electrical impulse. The receptor then desensitizes rapidly and enters a transient inactive state, characterized by the presence of bound agonist. Independent of its ionotropic glutamate receptor activity, acts as a thermoreceptor conferring sensitivity to cold temperatures. Functions in dorsal root ganglion neurons. This is Glutamate receptor ionotropic, kainate 2 (grik2) from Xenopus laevis (African clawed frog).